The sequence spans 310 residues: p-hydroxybenzoic acid efflux pump subunit AaeA (310 aa).

A helical membrane pass occupies residues 12-32; it reads AITLVLVILAFIAIFRAWVYY.

This sequence belongs to the membrane fusion protein (MFP) (TC 8.A.1) family.

It localises to the cell inner membrane. Forms an efflux pump with AaeB. This Salmonella heidelberg (strain SL476) protein is p-hydroxybenzoic acid efflux pump subunit AaeA.